A 147-amino-acid chain; its full sequence is Catabolic 3-dehydroquinase 2 (147 aa).

The active-site Proton acceptor is Tyr23. Substrate contacts are provided by Asn74, His80, and Asp87. His100 serves as the catalytic Proton donor. Residues 101 to 102 and Arg111 each bind substrate; that span reads IT.

The protein belongs to the type-II 3-dehydroquinase family. As to quaternary structure, homododecamer. Adopts a ring-like structure, composed of an arrangement of two hexameric rings stacked on top of one another.

It carries out the reaction 3-dehydroquinate = 3-dehydroshikimate + H2O. It functions in the pathway aromatic compound metabolism; 3,4-dihydroxybenzoate biosynthesis; 3,4-dihydroxybenzoate from 3-dehydroquinate: step 1/2. Its function is as follows. Is involved in the catabolism of quinate. Allows the utilization of quinate as carbon source via the beta-ketoadipate pathway. The sequence is that of Catabolic 3-dehydroquinase 2 from Aspergillus terreus (strain NIH 2624 / FGSC A1156).